The sequence spans 56 residues: MAVQQNRKTRSKRGMRRSHDALTTAALSVDATSGETHLRHNVTAEGYYRGKKVINK.

The disordered stretch occupies residues 1–28 (MAVQQNRKTRSKRGMRRSHDALTTAALS). Over residues 7-16 (RKTRSKRGMR) the composition is skewed to basic residues.

It belongs to the bacterial ribosomal protein bL32 family.

In Vibrio vulnificus (strain CMCP6), this protein is Large ribosomal subunit protein bL32.